Reading from the N-terminus, the 138-residue chain is Small ribosomal subunit protein uS11c (138 aa).

It belongs to the universal ribosomal protein uS11 family. As to quaternary structure, part of the 30S ribosomal subunit.

Its subcellular location is the plastid. The protein resides in the chloroplast. In Morus indica (Mulberry), this protein is Small ribosomal subunit protein uS11c.